The following is a 221-amino-acid chain: Probable GTP-binding protein EngB (221 aa).

Positions 37 to 219 (QGIEIALAGR…RAAIVKLLRE (183 aa)) constitute an EngB-type G domain. GTP is bound by residues 45-52 (GRSNVGKS), 72-76 (GRTQE), 97-100 (DMPG), 164-167 (TKTD), and 198-200 (TSS). 2 residues coordinate Mg(2+): Ser-52 and Thr-74.

The protein belongs to the TRAFAC class TrmE-Era-EngA-EngB-Septin-like GTPase superfamily. EngB GTPase family. Mg(2+) serves as cofactor.

In terms of biological role, necessary for normal cell division and for the maintenance of normal septation. The protein is Probable GTP-binding protein EngB of Afipia carboxidovorans (strain ATCC 49405 / DSM 1227 / KCTC 32145 / OM5) (Oligotropha carboxidovorans).